A 306-amino-acid polypeptide reads, in one-letter code: 2-phospho-L-lactate transferase (306 aa).

Asp-54 and Arg-93 together coordinate 7,8-didemethyl-8-hydroxy-5-deazariboflavin.

This sequence belongs to the CofD family. Homodimer. Requires Mg(2+) as cofactor.

The enzyme catalyses (2S)-lactyl-2-diphospho-5'-guanosine + 7,8-didemethyl-8-hydroxy-5-deazariboflavin = oxidized coenzyme F420-0 + GMP + H(+). It functions in the pathway cofactor biosynthesis; coenzyme F420 biosynthesis. Catalyzes the transfer of the 2-phospholactate moiety from (2S)-lactyl-2-diphospho-5'-guanosine to 7,8-didemethyl-8-hydroxy-5-deazariboflavin (FO) with the formation of oxidized coenzyme F420-0 and GMP. This Methanothermobacter thermautotrophicus (strain ATCC 29096 / DSM 1053 / JCM 10044 / NBRC 100330 / Delta H) (Methanobacterium thermoautotrophicum) protein is 2-phospho-L-lactate transferase.